A 324-amino-acid polypeptide reads, in one-letter code: Methionyl-tRNA formyltransferase (324 aa).

109–112 contributes to the (6S)-5,6,7,8-tetrahydrofolate binding site; it reads SILP.

It belongs to the Fmt family.

It catalyses the reaction L-methionyl-tRNA(fMet) + (6R)-10-formyltetrahydrofolate = N-formyl-L-methionyl-tRNA(fMet) + (6S)-5,6,7,8-tetrahydrofolate + H(+). Its function is as follows. Attaches a formyl group to the free amino group of methionyl-tRNA(fMet). The formyl group appears to play a dual role in the initiator identity of N-formylmethionyl-tRNA by promoting its recognition by IF2 and preventing the misappropriation of this tRNA by the elongation apparatus. In Acidothermus cellulolyticus (strain ATCC 43068 / DSM 8971 / 11B), this protein is Methionyl-tRNA formyltransferase.